A 340-amino-acid chain; its full sequence is Glycerol-3-phosphate dehydrogenase [NAD(P)+] (340 aa).

4 residues coordinate NADPH: Ser-14, Phe-15, Arg-35, and Lys-108. Positions 108 and 136 each coordinate sn-glycerol 3-phosphate. Ala-140 contacts NADPH. Residues Lys-191, Asp-244, Ser-254, Arg-255, and Asn-256 each contribute to the sn-glycerol 3-phosphate site. Catalysis depends on Lys-191, which acts as the Proton acceptor. Arg-255 contributes to the NADPH binding site. Glu-281 contributes to the NADPH binding site.

The protein belongs to the NAD-dependent glycerol-3-phosphate dehydrogenase family.

It localises to the cytoplasm. The enzyme catalyses sn-glycerol 3-phosphate + NAD(+) = dihydroxyacetone phosphate + NADH + H(+). It catalyses the reaction sn-glycerol 3-phosphate + NADP(+) = dihydroxyacetone phosphate + NADPH + H(+). Its pathway is membrane lipid metabolism; glycerophospholipid metabolism. Functionally, catalyzes the reduction of the glycolytic intermediate dihydroxyacetone phosphate (DHAP) to sn-glycerol 3-phosphate (G3P), the key precursor for phospholipid synthesis. In Pseudomonas paraeruginosa (strain DSM 24068 / PA7) (Pseudomonas aeruginosa (strain PA7)), this protein is Glycerol-3-phosphate dehydrogenase [NAD(P)+].